Here is a 491-residue protein sequence, read N- to C-terminus: MRSAAAALSVCVLAVLLHWICWTDRSAELLGFRAADRPKADVREVLVGVLSARHNHELRQAIRDTWLGYLKQHPHFQNRVLVKFIIGAQGCSVPLEDLEDQYSCSQLELSEAAVSGQEMAILSVPDSSALLQSDVPVLSLDFKVLHSVVITQLGVFPNKPPHYLKGNITVRLLQVDQEEAVISARFSSVSPGTAADGMFYKPVEQFILPKGFEGTLLWEAEDSTALMSVNTSALRLNNGGGVLHFRSIEEGTLPHRNALGFPGLAGGFTFTVYDVEVLSEMLRGRSGRQKIREAQLKGEDEALQEESLRHGDMVFVDVVGTYRNVPSKLLQFYKWSVENADFSLLLKTDDDCFIDVDAVLMKMQRRRLTHTSLWWGNFRQNWAVDRVGKWQELEYASPAYPAFACGSGYVVSRDLVQWLASNAQHLKAYQGEDVSMGIWMAAVGPRKYQDSGWLCEKECYVDMLSSPQHSAEELRLLWSRKNKCGDPCGCS.

Residues 1-2 are Cytoplasmic-facing; that stretch reads MR. Residues 3–23 traverse the membrane as a helical; Signal-anchor for type II membrane protein segment; the sequence is SAAAALSVCVLAVLLHWICWT. Residues 24 to 491 are Lumenal-facing; that stretch reads DRSAELLGFR…NKCGDPCGCS (468 aa). 2 N-linked (GlcNAc...) asparagine glycosylation sites follow: Asn-167 and Asn-230.

Belongs to the glycosyltransferase 31 family.

The protein resides in the golgi apparatus membrane. The protein localises to the endoplasmic reticulum. It carries out the reaction 3-O-(N-acetyl-beta-D-glucosaminyl-(1-&gt;4)-alpha-D-mannosyl)-L-threonyl-[protein] + UDP-N-acetyl-alpha-D-galactosamine = 3-O-[beta-D-GalNAc-(1-&gt;3)-beta-D-GlcNAc-(1-&gt;4)-alpha-D-Man]-L-Thr-[protein] + UDP + H(+). The protein operates within protein modification; protein glycosylation. In terms of biological role, beta-1,3-N-acetylgalactosaminyltransferase that synthesizes a unique carbohydrate structure, GalNAc-beta-1-3GlcNAc, on N- and O-glycans. Has no galactose nor galactosaminyl transferase activity toward any acceptor substrate. Involved in alpha-dystroglycan (dag1) glycosylation. The sequence is that of UDP-GalNAc:beta-1,3-N-acetylgalactosaminyltransferase 2 (b3galnt2) from Danio rerio (Zebrafish).